We begin with the raw amino-acid sequence, 208 residues long: uncharacterized protein (208 aa).

Residues 1 to 16 (MKFLLIACLAVPAILA) form the signal peptide. N79 carries N-linked (GlcNAc...) asparagine glycosylation.

This is an uncharacterized protein from Caenorhabditis elegans.